Here is a 152-residue protein sequence, read N- to C-terminus: Arginine repressor (152 aa).

It belongs to the ArgR family.

The protein resides in the cytoplasm. It participates in amino-acid biosynthesis; L-arginine biosynthesis [regulation]. In terms of biological role, regulates arginine biosynthesis genes. The polypeptide is Arginine repressor (Caldicellulosiruptor saccharolyticus (strain ATCC 43494 / DSM 8903 / Tp8T 6331)).